A 205-amino-acid chain; its full sequence is MSDPTTAEIANEPRLITETGLDRRIADIIEPVLVQMGFRLVRVRMSGQNGLTLQIMTERNDGTMTVEDCEDVSKAVSPVLDVEDPIDKAYHLEVSSPGIDRPMVRKSDFVRWQGHLMKCETSIMVDGRKRFRGKIVSVDEEGFRLERDQPAYGEEAVVAIPFTALSDARLILTDDLIRDALAADKKAKAARAANENFEDEDRDIE.

Belongs to the RimP family.

Its subcellular location is the cytoplasm. Functionally, required for maturation of 30S ribosomal subunits. The polypeptide is Ribosome maturation factor RimP (Sinorhizobium fredii (strain NBRC 101917 / NGR234)).